We begin with the raw amino-acid sequence, 261 residues long: tRNA pseudouridine synthase A (261 aa).

The active-site Nucleophile is the D51. Y109 contributes to the substrate binding site.

The protein belongs to the tRNA pseudouridine synthase TruA family. As to quaternary structure, homodimer.

The enzyme catalyses uridine(38/39/40) in tRNA = pseudouridine(38/39/40) in tRNA. Its function is as follows. Formation of pseudouridine at positions 38, 39 and 40 in the anticodon stem and loop of transfer RNAs. The chain is tRNA pseudouridine synthase A from Shewanella sp. (strain MR-7).